The chain runs to 121 residues: Cell division protein FtsL (121 aa).

Over 1 to 34 (MISRVTEALSKVKGSMGSHERHALPGVIGDDLLR) the chain is Cytoplasmic. A helical transmembrane segment spans residues 35–57 (FGKLPLCLFICIILTAVTVVTTA). Residues 58–121 (HHTRLLTAQR…PSQENIVVQK (64 aa)) are Periplasmic-facing.

This sequence belongs to the FtsL family. In terms of assembly, part of a complex composed of FtsB, FtsL and FtsQ.

It is found in the cell inner membrane. Essential cell division protein. May link together the upstream cell division proteins, which are predominantly cytoplasmic, with the downstream cell division proteins, which are predominantly periplasmic. The sequence is that of Cell division protein FtsL from Shigella dysenteriae serotype 1 (strain Sd197).